A 117-amino-acid polypeptide reads, in one-letter code: Small ribosomal subunit protein bS16 (117 aa).

Over residues 81–90 (LKKRPNRNNP) the composition is skewed to basic residues. A disordered region spans residues 81–117 (LKKRPNRNNPHKGQPGKKAQERISAAKQVAEAESAPV).

This sequence belongs to the bacterial ribosomal protein bS16 family.

This Bartonella quintana (strain Toulouse) (Rochalimaea quintana) protein is Small ribosomal subunit protein bS16.